We begin with the raw amino-acid sequence, 483 residues long: Acetyl-coenzyme A carboxylase carboxyl transferase subunit beta, chloroplastic (483 aa).

In terms of domain architecture, CoA carboxyltransferase N-terminal spans 219–483; the sequence is LWVQCENCYG…LHTFFPLNQN (265 aa). 4 residues coordinate Zn(2+): Cys223, Cys226, Cys242, and Cys245. The C4-type zinc finger occupies 223–245; that stretch reads CENCYGLNYKKFFKSKMNLCEQC.

This sequence belongs to the AccD/PCCB family. In terms of assembly, acetyl-CoA carboxylase is a heterohexamer composed of biotin carboxyl carrier protein, biotin carboxylase and 2 subunits each of ACCase subunit alpha and ACCase plastid-coded subunit beta (accD). It depends on Zn(2+) as a cofactor.

The protein resides in the plastid. It localises to the chloroplast stroma. The catalysed reaction is N(6)-carboxybiotinyl-L-lysyl-[protein] + acetyl-CoA = N(6)-biotinyl-L-lysyl-[protein] + malonyl-CoA. It functions in the pathway lipid metabolism; malonyl-CoA biosynthesis; malonyl-CoA from acetyl-CoA: step 1/1. Component of the acetyl coenzyme A carboxylase (ACC) complex. Biotin carboxylase (BC) catalyzes the carboxylation of biotin on its carrier protein (BCCP) and then the CO(2) group is transferred by the transcarboxylase to acetyl-CoA to form malonyl-CoA. This chain is Acetyl-coenzyme A carboxylase carboxyl transferase subunit beta, chloroplastic, found in Guizotia abyssinica (Niger).